Consider the following 244-residue polypeptide: MGRGKVEVKRIENKITRQVTFSKRKSGLLKKAYELSVLCDAEVSLIIFSTGGKLYEFSNVGVGRTIERYYRCKDNLLDNDTLEDTQGLRQEVTKLKCKYESLLRTHRNLVGEDLEGMSIKELQTLERQLEGALSATRKQKTQVMMEQMEELRRKERELGDINNKLKLETEDHDFKGFQDLLLNPVLTAGCSTDFSLQSTHQNYISDCNLGYFLQIGFQQHYEQGEGSSVTKSNARSDAETNFVQ.

In terms of domain architecture, MADS-box spans 3–57 (RGKVEVKRIENKITRQVTFSKRKSGLLKKAYELSVLCDAEVSLIIFSTGGKLYEF). The 91-residue stretch at 85–175 (TQGLRQEVTK…KLETEDHDFK (91 aa)) folds into the K-box domain.

Its subcellular location is the nucleus. Probable transcription factor. The sequence is that of Agamous-like MADS-box protein AGL13 (AGL13) from Arabidopsis thaliana (Mouse-ear cress).